Consider the following 289-residue polypeptide: RING-H2 finger protein ATL29 (289 aa).

A helical transmembrane segment spans residues 25 to 45 (VILTVILLVFFFIGFFTLYFC). The RING-type; atypical zinc-finger motif lies at 110–152 (CAICLLEFDGDHVLRLLTTCYHVFHQECIDLWFESHRTCPVCR). A disordered region spans residues 179–237 (TSDDEEDDHHRQQTTTQIDTWPSSGQTSSIKKEQNLPEKFSRSHSTGHSIVRNKPEEED). Positions 191 to 207 (QTTTQIDTWPSSGQTSS) are enriched in polar residues. Residues 208–219 (IKKEQNLPEKFS) are compositionally biased toward basic and acidic residues.

It belongs to the RING-type zinc finger family. ATL subfamily.

The protein localises to the membrane. The catalysed reaction is S-ubiquitinyl-[E2 ubiquitin-conjugating enzyme]-L-cysteine + [acceptor protein]-L-lysine = [E2 ubiquitin-conjugating enzyme]-L-cysteine + N(6)-ubiquitinyl-[acceptor protein]-L-lysine.. The protein operates within protein modification; protein ubiquitination. In Arabidopsis thaliana (Mouse-ear cress), this protein is RING-H2 finger protein ATL29 (ATL29).